A 476-amino-acid polypeptide reads, in one-letter code: Trigger factor (476 aa).

The PPIase FKBP-type domain occupies 174 to 261; it reads GDIAVVSFKG…LKDLKEKELP (88 aa). The segment at 436–476 is disordered; it reads KENTTKTSKTTKNSKTTKATKTTKTTKTTKTSKTQNKKEKK. Over residues 440-469 the composition is skewed to low complexity; that stretch reads TKTSKTTKNSKTTKATKTTKTTKTTKTSKT.

It belongs to the FKBP-type PPIase family. Tig subfamily.

The protein localises to the cytoplasm. The enzyme catalyses [protein]-peptidylproline (omega=180) = [protein]-peptidylproline (omega=0). Functionally, involved in protein export. Acts as a chaperone by maintaining the newly synthesized protein in an open conformation. Functions as a peptidyl-prolyl cis-trans isomerase. The polypeptide is Trigger factor (Prochlorococcus marinus (strain MIT 9215)).